We begin with the raw amino-acid sequence, 125 residues long: RxLR effector protein Avh6 (125 aa).

A signal peptide spans 1 to 25 (MRLSSTTFVVLAAVLLASGTAVSKA). The short motif at 48-70 (RFLRSHHTEDGKAKLSNYDNEER) is the RxLR-dEER element.

It belongs to the RxLR effector family.

Its subcellular location is the secreted. The protein resides in the host cell. Its function is as follows. Effector that suppresses plant defense responses during the early stages of pathogen infection. Suppresses cell death induced by effectors and PAMPs in plant hosts. Triggers a hypersensitive response (HR) in the presence of Rps1d. Suppresses BAX-induced cell death and enhanced P.capsici infection in Nicotiana benthamiana. Also suppresses effector-triggered immunity induction by associating with Avr1b and Rps1b, suggesting a role in suppressing plant immunity. The sequence is that of RxLR effector protein Avh6 from Phytophthora sojae (Soybean stem and root rot agent).